Here is a 490-residue protein sequence, read N- to C-terminus: Cytochrome P450 71A25 (490 aa).

The chain crosses the membrane as a helical span at residues 1–21 (MMMMIILLWSIIFMTILFLKK). Cysteine 431 lines the heme pocket.

It belongs to the cytochrome P450 family. Heme serves as cofactor.

The protein resides in the membrane. The protein is Cytochrome P450 71A25 (CYP71A25) of Arabidopsis thaliana (Mouse-ear cress).